A 365-amino-acid chain; its full sequence is Deoxyribonuclease-2-alpha (365 aa).

A signal peptide spans 1 to 19; it reads MATLSSLLLTALLWVPVGT. A disulfide bridge links cysteine 22 with cysteine 162. N-linked (GlcNAc...) asparagine glycans are attached at residues asparagine 215, asparagine 269, and asparagine 293. Intrachain disulfides connect cysteine 270–cysteine 348 and cysteine 311–cysteine 330. Histidine 298 is an active-site residue.

It belongs to the DNase II family.

It is found in the lysosome. The enzyme catalyses Endonucleolytic cleavage to nucleoside 3'-phosphates and 3'-phosphooligonucleotide end-products.. Functionally, hydrolyzes DNA under acidic conditions with a preference for double-stranded DNA. Plays a major role in the clearance of nucleic acids generated through apoptosis, hence preventing autoinflammation. Necessary for proper fetal development and for definitive erythropoiesis in fetal liver and bone marrow, where it degrades nuclear DNA expelled from erythroid precursor cells. This chain is Deoxyribonuclease-2-alpha (DNASE2), found in Bos taurus (Bovine).